The primary structure comprises 522 residues: DNA primase DnaG (522 aa).

The Toprim domain occupies 171 to 257; sequence DAIIILEGRA…CVEDLVQKEI (87 aa). Mg(2+) is bound by residues glutamate 177, aspartate 219, and aspartate 221.

The protein belongs to the archaeal DnaG primase family. As to quaternary structure, forms a ternary complex with MCM helicase and DNA. Component of the archaeal exosome complex. The cofactor is Mg(2+).

It carries out the reaction ssDNA + n NTP = ssDNA/pppN(pN)n-1 hybrid + (n-1) diphosphate.. Functionally, RNA polymerase that catalyzes the synthesis of short RNA molecules used as primers for DNA polymerase during DNA replication. Also part of the exosome, which is a complex involved in RNA degradation. Acts as a poly(A)-binding protein that enhances the interaction between heteromeric, adenine-rich transcripts and the exosome. This chain is DNA primase DnaG, found in Methanosarcina mazei (strain ATCC BAA-159 / DSM 3647 / Goe1 / Go1 / JCM 11833 / OCM 88) (Methanosarcina frisia).